The sequence spans 303 residues: Phytochrome-associated serine/threonine-protein phosphatase (303 aa).

Zn(2+) is bound by residues aspartate 50, histidine 52, aspartate 78, and asparagine 110. The Proton donor role is filled by histidine 111. Zn(2+)-binding residues include histidine 160 and histidine 234.

It belongs to the PPP phosphatase family. PP-6 (PP-V) subfamily. Interacts with PHYA and PHYB, mostly when they are phosphorylated and in Pfr forms. It depends on Zn(2+) as a cofactor. Mostly expressed in flowers and stems.

Its subcellular location is the cytoplasm. It carries out the reaction O-phospho-L-seryl-[protein] + H2O = L-seryl-[protein] + phosphate. The enzyme catalyses O-phospho-L-threonyl-[protein] + H2O = L-threonyl-[protein] + phosphate. Functionally, catalytic subunit of protein phosphatase 6 (PP6). Dephosphorylates phosphorylated phytochromes, with a preference toward Pfr forms. Plays a major role in the photoperiodic control of flowering time in long days by modulating phytochrome signals in flowering time control. The protein is Phytochrome-associated serine/threonine-protein phosphatase of Pisum sativum (Garden pea).